The following is a 262-amino-acid chain: DNA-directed RNA polymerase subunit Rpo3 (262 aa).

It belongs to the archaeal Rpo3/eukaryotic RPB3 RNA polymerase subunit family. Part of the RNA polymerase complex.

It localises to the cytoplasm. The enzyme catalyses RNA(n) + a ribonucleoside 5'-triphosphate = RNA(n+1) + diphosphate. DNA-dependent RNA polymerase (RNAP) catalyzes the transcription of DNA into RNA using the four ribonucleoside triphosphates as substrates. The polypeptide is DNA-directed RNA polymerase subunit Rpo3 (Pyrobaculum neutrophilum (strain DSM 2338 / JCM 9278 / NBRC 100436 / V24Sta) (Thermoproteus neutrophilus)).